Reading from the N-terminus, the 350-residue chain is TLC domain-containing protein fld-1 (350 aa).

The helical transmembrane segment at 9 to 29 threads the bilayer; sequence TDLLGPVPTMFLWVIVSFAFF. Residues 65–100 are disordered; it reads GQEAENTENPPENEAEAGEQVEQEPEPDSRDLSAIP. The span at 75-90 shows a compositional bias: acidic residues; it reads PENEAEAGEQVEQEPE. The TLC domain maps to 102–279; it reads NKKWRISNEC…IINGLVIASL (178 aa). 6 consecutive transmembrane segments (helical) span residues 111–131, 145–165, 173–193, 195–215, 229–249, and 270–292; these read CVSL…LLYY, VAIN…VDLL, IIEL…TMFF, RFLG…FLHS, PSFR…RLCV, and IING…RLLA.

Ubiquitously expressed.

The protein localises to the cell membrane. Regulates the composition and fluidity of the plasma membrane. Inhibits the incorporation of membrane-fluidizing phospholipids containing omega-3 long-chain polyunsaturated fatty acids (LCPUFA) and thereby promotes membrane rigidity. Does not appear to have any effect on LCPUFA synthesis. The sequence is that of TLC domain-containing protein fld-1 from Caenorhabditis elegans.